Consider the following 732-residue polypeptide: Protein DIA2 (732 aa).

TPR repeat units lie at residues 15 to 48, 78 to 111, and 113 to 145; these read VLKA…CDSY, IKIL…EPGN, and KCYI…CNND. Residues 204 to 251 enclose the F-box domain; sequence TDLVGNLPIEILPIIFQRFTTKELVTLSLVCNKWRDKILYHLDCFQEF. Ser-393 carries the post-translational modification Phosphoserine. 7 LRR repeats span residues 425 to 449, 480 to 505, 509 to 532, 550 to 574, 579 to 602, 616 to 637, and 645 to 669; these read LEKI…LLRG, FPDL…LLKF, WKNL…DEDQ, LQNL…LCEQ, GRKL…HAHT, LSKL…TMKS, and LENL…EFLK.

It belongs to the DIA2 family. As to quaternary structure, component of the SCF(DIA2) complex containing CDC53, SKP1, RBX1 and DIA2. Interacts with SKP1.

Its subcellular location is the nucleus. In terms of biological role, F-box protein component of a SCF (SKP1-CUL1-F-box protein) E3 ubiquitin-protein ligase complex which mediates the ubiquitination and subsequent proteasomal degradation of target proteins. Probably recognizes and binds to phosphorylated target proteins. The SCF(DIA2) complex is specifically involved in the pheromone induced degradation of phosphorylated TEC1. The SCF(DIA2) complex binds to DNA replication origins. Involved in DNA replication, genome stability, and the control of cell cycle, probably through its association to replication origins to facilitate the ubiquitination of another origin-binding protein. Required for invasive growth and growth under alkaline conditions. The sequence is that of Protein DIA2 (DIA2) from Saccharomyces cerevisiae (strain ATCC 204508 / S288c) (Baker's yeast).